A 346-amino-acid chain; its full sequence is Membrane progestin receptor alpha (346 aa).

At 1-72 (MAMAQKLSHL…RTLFQQHNEA (72 aa)) the chain is on the cytoplasmic side. A helical transmembrane segment spans residues 73–93 (VNVWTHLLAALVLLLRLALFV). At 94–103 (ETVDFWGDPH) the chain is on the extracellular side. Residues 104–124 (ALPLFIIVLASFTYLSFSALA) form a helical membrane-spanning segment. Over 125–137 (HLLQAKSEFWHYS) the chain is Cytoplasmic. The helical transmembrane segment at 138–158 (FFFLDYVGVAVYQFGSALAHF) threads the bilayer. Topologically, residues 159-169 (YYAIEPAWHAQ) are extracellular. A helical membrane pass occupies residues 170–190 (VQAVFLPMAAFLAWLSCIGSC). The Cytoplasmic segment spans residues 191–237 (YNKYIQKPGLLGRTCQEVPSVLAYALDISPVVHRIFVSSDPTTDDPA). A helical membrane pass occupies residues 238 to 258 (LLYHKCQVVFFLLAAAFFSTF). The Extracellular segment spans residues 259–276 (MPERWFPGSCHVFGQGHQ). A helical transmembrane segment spans residues 277–297 (LFHIFLVLCTLAQLEAVALDY). Topologically, residues 298-316 (EARRPIYEPLHTHWPHNFS) are cytoplasmic. The chain crosses the membrane as a helical span at residues 317–337 (GLFLLTVGSSILTAFLLSQLV). The Extracellular segment spans residues 338–346 (QRKLDQKTK).

The protein belongs to the ADIPOR family. As to expression, expressed in a wide range of tissues including ovary, testis, placenta, uterus and bladder.

It is found in the cell membrane. Functionally, plasma membrane progesterone (P4) receptor coupled to G proteins. Seems to act through a G(i) mediated pathway. May be involved in oocyte maturation. Involved in neurosteroid inhibition of apoptosis. Also binds dehydroepiandrosterone (DHEA), pregnanolone, pregnenolone and allopregnanolone. The sequence is that of Membrane progestin receptor alpha from Homo sapiens (Human).